The sequence spans 334 residues: GTPase Obg (334 aa).

Positions 1 to 159 (MRFVDEVVIK…KEVRLELNLL (159 aa)) constitute an Obg domain. An OBG-type G domain is found at 160–331 (ADIALLGLPN…LAKKLNEFLH (172 aa)). GTP is bound by residues 166 to 173 (GLPNAGKS), 191 to 195 (FTTMY), 212 to 215 (DIPG), 282 to 285 (NKID), and 312 to 314 (SAA). Residues S173 and T193 each contribute to the Mg(2+) site.

The protein belongs to the TRAFAC class OBG-HflX-like GTPase superfamily. OBG GTPase family. In terms of assembly, monomer. The cofactor is Mg(2+).

It is found in the cytoplasm. Functionally, an essential GTPase which binds GTP, GDP and possibly (p)ppGpp with moderate affinity, with high nucleotide exchange rates and a fairly low GTP hydrolysis rate. Plays a role in control of the cell cycle, stress response, ribosome biogenesis and in those bacteria that undergo differentiation, in morphogenesis control. The protein is GTPase Obg of Francisella philomiragia subsp. philomiragia (strain ATCC 25017 / CCUG 19701 / FSC 153 / O#319-036).